The primary structure comprises 154 residues: DNA gyrase inhibitor (154 aa).

The protein belongs to the DNA gyrase inhibitor family. Interacts with DNA gyrase.

The protein localises to the cytoplasm. Functionally, inhibits the supercoiling activity of DNA gyrase. Acts by inhibiting DNA gyrase at an early step, prior to (or at the step of) binding of DNA by the gyrase. It protects cells against toxins that target DNA gyrase, by inhibiting activity of these toxins and reducing the formation of lethal double-strand breaks in the cell. The protein is DNA gyrase inhibitor of Pectobacterium carotovorum subsp. carotovorum (strain PC1).